A 66-amino-acid polypeptide reads, in one-letter code: Large ribosomal subunit protein bL31 (66 aa).

4 residues coordinate Zn(2+): cysteine 16, cysteine 18, cysteine 36, and cysteine 39.

It belongs to the bacterial ribosomal protein bL31 family. Type A subfamily. In terms of assembly, part of the 50S ribosomal subunit. Zn(2+) is required as a cofactor.

Binds the 23S rRNA. This is Large ribosomal subunit protein bL31 from Natranaerobius thermophilus (strain ATCC BAA-1301 / DSM 18059 / JW/NM-WN-LF).